The sequence spans 187 residues: Oligoribonuclease (187 aa).

One can recognise an Exonuclease domain in the interval 7–170 (LCWLDMEMTG…DDILESIEEM (164 aa)). The active site involves tyrosine 128.

This sequence belongs to the oligoribonuclease family.

Its subcellular location is the cytoplasm. Its function is as follows. 3'-to-5' exoribonuclease specific for small oligoribonucleotides. This is Oligoribonuclease from Neisseria meningitidis serogroup A / serotype 4A (strain DSM 15465 / Z2491).